The sequence spans 294 residues: Acetyl-coenzyme A carboxylase carboxyl transferase subunit beta (294 aa).

Positions 29 to 294 (LWEKCPECGQ…TQEVKLQTNA (266 aa)) constitute a CoA carboxyltransferase N-terminal domain. Zn(2+) is bound by residues C33, C36, C52, and C55. The C4-type zinc finger occupies 33–55 (CPECGQVVYRKDLIDNCSVCSNC).

This sequence belongs to the AccD/PCCB family. Acetyl-CoA carboxylase is a heterohexamer composed of biotin carboxyl carrier protein (AccB), biotin carboxylase (AccC) and two subunits each of ACCase subunit alpha (AccA) and ACCase subunit beta (AccD). The cofactor is Zn(2+).

Its subcellular location is the cytoplasm. It catalyses the reaction N(6)-carboxybiotinyl-L-lysyl-[protein] + acetyl-CoA = N(6)-biotinyl-L-lysyl-[protein] + malonyl-CoA. The protein operates within lipid metabolism; malonyl-CoA biosynthesis; malonyl-CoA from acetyl-CoA: step 1/1. Its function is as follows. Component of the acetyl coenzyme A carboxylase (ACC) complex. Biotin carboxylase (BC) catalyzes the carboxylation of biotin on its carrier protein (BCCP) and then the CO(2) group is transferred by the transcarboxylase to acetyl-CoA to form malonyl-CoA. In Prochlorococcus marinus (strain NATL1A), this protein is Acetyl-coenzyme A carboxylase carboxyl transferase subunit beta.